The following is a 2646-amino-acid chain: Probable helicase senataxin (2646 aa).

S102 bears the Phosphoserine mark. A Glycyl lysine isopeptide (Lys-Gly) (interchain with G-Cter in SUMO1) cross-link involves residue K339. S640 bears the Phosphoserine mark. 2 disordered regions span residues 705–734 and 825–876; these read KISA…WGCD and GGAL…DDED. Residues 714–727 show a composition bias toward polar residues; the sequence is ESSSYAPSNSTSRN. A compositionally biased stretch (acidic residues) spans 867–876; sequence LDNSSSDDED. Residues S870, S871, S872, S938, S1002, and S1004 each carry the phosphoserine modification. The disordered stretch occupies residues 1001 to 1023; the sequence is ISDSDEEEDEDEDERSSSEENIK. The segment covering 1003-1014 has biased composition (acidic residues); it reads DSDEEEDEDEDE. K1051 is covalently cross-linked (Glycyl lysine isopeptide (Lys-Gly) (interchain with G-Cter in SUMO2)). Over residues 1122 to 1133 the composition is skewed to basic and acidic residues; it reads RNKAEGVKEHAG. The interval 1122–1245 is disordered; it reads RNKAEGVKEH…DTRRGQSKSS (124 aa). Residues 1147-1156 show a composition bias toward basic residues; sequence GVKKPKRKRY. The segment covering 1176–1189 has biased composition (basic and acidic residues); it reads LPDRRDLTESDLKS. Residues 1196–1211 show a composition bias toward polar residues; that stretch reads TPSSSVERDSTILQKS. Basic residues predominate over residues 1212 to 1222; the sequence is TKSRTHSKPVR. S1318 carries the post-translational modification Phosphoserine. Residues K1328, K1329, and K1398 each participate in a glycyl lysine isopeptide (Lys-Gly) (interchain with G-Cter in SUMO2) cross-link. A Phosphoserine modification is found at S1472. Residue T1474 is modified to Phosphothreonine. Residues 1591–1627 are disordered; that stretch reads LSKSLESTTLQQSALKNKSSGAQPNLKVTPPSSMGSQ. The span at 1595 to 1613 shows a compositional bias: polar residues; sequence LESTTLQQSALKNKSSGAQ. Residue 1939-1946 participates in ATP binding; sequence GPPGTGKS. Residues 2046 to 2063 carry the Bipartite nuclear localization signal motif; the sequence is KKDLPSHIQEMLRRKEIL. T2450 is subject to Phosphothreonine. Disordered stretches follow at residues 2450–2472, 2486–2506, and 2569–2624; these read THPP…NRLD, HTPS…QDRL, and SHRS…THHV. 2 stretches are compositionally biased toward basic and acidic residues: residues 2496-2506 and 2593-2608; these read GPERPLLQDRL and KYSD…REPR. The segment at 2632–2646 is necessary for nuclear localization; the sequence is RRRLDDSSAKRRQFL.

It belongs to the DNA2/NAM7 helicase family. As to quaternary structure, homodimer. Interacts with PER2; the interaction inhibits termination of circadian target genes. Interacts with CHD4, POLR2A, PRKDC and TRIM28. Interacts with UBE2I. Interacts (via N-terminus domain) with EXOSC9 (via C-terminus region); the interaction enhances SETX sumoylation. Interacts with NCL (via N-terminus domain). Interacts with PABPN1, PABPC1 and SF3B1. Interacts with SMN1/SMN2 and POLR2A; SMN1/SMN2 recruits SETX to POLR2A. In terms of processing, ubiquitinated. Post-translationally, sumoylated preferentially with SUMO2 or SUMO3. As to expression, expressed in cerebellum, hippocampus, olfactory bulb, Bergmann glial fibers, stellate cells and Purkinje cells. Expressed in the epithelial cells of the lens but not in mature lens fiber cells. Expressed in the retina (highly expressed in inner and outer segments of photoreceptors and outer plexiform layer cells but weakly expressed in the inner plexiform and ganglion cell layers). Expressed in the kidney.

The protein localises to the nucleus. Its subcellular location is the nucleoplasm. The protein resides in the nucleolus. It is found in the cytoplasm. It localises to the chromosome. The protein localises to the telomere. Its subcellular location is the cell projection. The protein resides in the axon. It is found in the growth cone. Its function is as follows. Probable RNA/DNA helicase involved in diverse aspects of RNA metabolism and genomic integrity. Plays a role in transcription regulation by its ability to modulate RNA Polymerase II (Pol II) binding to chromatin and through its interaction with proteins involved in transcription. Contributes to the mRNA splicing efficiency and splice site selection. Required for the resolution of R-loop RNA-DNA hybrid formation at G-rich pause sites located downstream of the poly(A) site, allowing XRN2 recruitment and XRN2-mediated degradation of the downstream cleaved RNA and hence efficient RNA polymerase II (RNAp II) transcription termination. Required for the 3' transcriptional termination of PER1 and CRY2, thus playing an important role in the circadian rhythm regulation. Involved in DNA double-strand breaks damage response generated by oxidative stress. In association with RRP45, targets the RNA exosome complex to sites of transcription-induced DNA damage. Plays a role in the development and maturation of germ cells: essential for male meiosis, acting at the interface of transcription and meiotic recombination, and in the process of gene silencing during meiotic sex chromosome inactivation (MSCI). Plays a role in neurite outgrowth in hippocampal cells through FGF8-activated signaling pathways. Inhibits retinoic acid-induced apoptosis. May be involved in telomeric stability through the regulation of telomere repeat-containing RNA (TERRA) transcription. The polypeptide is Probable helicase senataxin (Mus musculus (Mouse)).